We begin with the raw amino-acid sequence, 35 residues long: Mu-theraphotoxin-Pm1a (35 aa).

3 disulfide bridges follow: C3–C17, C10–C22, and C16–C29. Phenylalanine amide is present on F35.

It belongs to the neurotoxin 10 (Hwtx-1) family. 62 (Vatx) subfamily. As to expression, expressed by the venom gland.

Its subcellular location is the secreted. Gating-modifier toxin with weak activity on Nav1.7/SCN9A and Nav1.8/SCN10A. Inhibits Nav1.7/SCN9A peak current (IC(50)=334 nM) and shifts the voltage dependence of activation to more depolarised membrane potentials. Shows 21% peak current inhibition (at 10 uM) on Nav1.8/SCN10A sodium channels. This is Mu-theraphotoxin-Pm1a from Poecilotheria metallica (Metallic blue ornamental tree spider).